We begin with the raw amino-acid sequence, 144 residues long: UPF0102 protein BURPS1106A_3900 (144 aa).

The disordered stretch occupies residues 1 to 28; sequence MCHAREASPGTGEPEAAPRDNFPRAAGS.

Belongs to the UPF0102 family.

The protein is UPF0102 protein BURPS1106A_3900 of Burkholderia pseudomallei (strain 1106a).